The primary structure comprises 216 residues: Adenylate kinase (216 aa).

Residue G10–T15 coordinates ATP. Positions S30–V59 are NMP. Residues T31, R36, Q57–V59, G85–R88, and Q92 contribute to the AMP site. The tract at residues G126–D164 is LID. R127 provides a ligand contact to ATP. C130, C133, C150, and C153 together coordinate Zn(2+). R161 and R172 together coordinate AMP. ATP is bound at residue A200.

It belongs to the adenylate kinase family. Monomer.

It localises to the cytoplasm. The catalysed reaction is AMP + ATP = 2 ADP. It participates in purine metabolism; AMP biosynthesis via salvage pathway; AMP from ADP: step 1/1. In terms of biological role, catalyzes the reversible transfer of the terminal phosphate group between ATP and AMP. Plays an important role in cellular energy homeostasis and in adenine nucleotide metabolism. This chain is Adenylate kinase, found in Novosphingobium aromaticivorans (strain ATCC 700278 / DSM 12444 / CCUG 56034 / CIP 105152 / NBRC 16084 / F199).